The primary structure comprises 308 residues: tRNA dimethylallyltransferase (308 aa).

10-17 (GPTASGKT) is a binding site for ATP. A substrate-binding site is contributed by 12–17 (TASGKT). Interaction with substrate tRNA regions lie at residues 35 to 38 (DSSL) and 159 to 163 (QRIFR).

It belongs to the IPP transferase family. As to quaternary structure, monomer. The cofactor is Mg(2+).

The catalysed reaction is adenosine(37) in tRNA + dimethylallyl diphosphate = N(6)-dimethylallyladenosine(37) in tRNA + diphosphate. Its function is as follows. Catalyzes the transfer of a dimethylallyl group onto the adenine at position 37 in tRNAs that read codons beginning with uridine, leading to the formation of N6-(dimethylallyl)adenosine (i(6)A). This Francisella philomiragia subsp. philomiragia (strain ATCC 25017 / CCUG 19701 / FSC 153 / O#319-036) protein is tRNA dimethylallyltransferase.